We begin with the raw amino-acid sequence, 163 residues long: ATP synthase subunit b 1 (163 aa).

The chain crosses the membrane as a helical span at residues Leu-6–Gly-26.

This sequence belongs to the ATPase B chain family. In terms of assembly, F-type ATPases have 2 components, F(1) - the catalytic core - and F(0) - the membrane proton channel. F(1) has five subunits: alpha(3), beta(3), gamma(1), delta(1), epsilon(1). F(0) has three main subunits: a(1), b(2) and c(10-14). The alpha and beta chains form an alternating ring which encloses part of the gamma chain. F(1) is attached to F(0) by a central stalk formed by the gamma and epsilon chains, while a peripheral stalk is formed by the delta and b chains.

Its subcellular location is the cell inner membrane. Functionally, f(1)F(0) ATP synthase produces ATP from ADP in the presence of a proton or sodium gradient. F-type ATPases consist of two structural domains, F(1) containing the extramembraneous catalytic core and F(0) containing the membrane proton channel, linked together by a central stalk and a peripheral stalk. During catalysis, ATP synthesis in the catalytic domain of F(1) is coupled via a rotary mechanism of the central stalk subunits to proton translocation. Component of the F(0) channel, it forms part of the peripheral stalk, linking F(1) to F(0). The polypeptide is ATP synthase subunit b 1 (Xanthobacter autotrophicus (strain ATCC BAA-1158 / Py2)).